Consider the following 122-residue polypeptide: Large ribosomal subunit protein uL14 (122 aa).

It belongs to the universal ribosomal protein uL14 family. In terms of assembly, part of the 50S ribosomal subunit. Forms a cluster with proteins L3 and L19. In the 70S ribosome, L14 and L19 interact and together make contacts with the 16S rRNA in bridges B5 and B8.

Functionally, binds to 23S rRNA. Forms part of two intersubunit bridges in the 70S ribosome. The polypeptide is Large ribosomal subunit protein uL14 (Chlamydia trachomatis serovar A (strain ATCC VR-571B / DSM 19440 / HAR-13)).